The chain runs to 431 residues: Glucose-1-phosphate adenylyltransferase (431 aa).

Lys39 is a beta-D-fructose 1,6-bisphosphate binding site. The AMP site is built by Arg40, His46, and Arg52. Position 114 (Tyr114) interacts with alpha-D-glucose 1-phosphate. AMP is bound at residue Arg130. Alpha-D-glucose 1-phosphate is bound by residues Gly179, Glu194 to Lys195, and Ser212. Arg386 lines the AMP pocket. Gln429 to Arg431 contacts beta-D-fructose 1,6-bisphosphate.

Belongs to the bacterial/plant glucose-1-phosphate adenylyltransferase family. Homotetramer.

The catalysed reaction is alpha-D-glucose 1-phosphate + ATP + H(+) = ADP-alpha-D-glucose + diphosphate. It participates in glycan biosynthesis; glycogen biosynthesis. Allosterically activated by fructose-1,6-bisphosphate (F16BP) and inhibited by AMP. Its function is as follows. Involved in the biosynthesis of ADP-glucose, a building block required for the elongation reactions to produce glycogen. Catalyzes the reaction between ATP and alpha-D-glucose 1-phosphate (G1P) to produce pyrophosphate and ADP-Glc. This is Glucose-1-phosphate adenylyltransferase from Klebsiella pneumoniae (strain 342).